Reading from the N-terminus, the 89-residue chain is Large ribosomal subunit protein bL27 (89 aa).

The tract at residues 1–20 is disordered; it reads MAHKKAGGSSRNGRDSIGRR.

The protein belongs to the bacterial ribosomal protein bL27 family.

This is Large ribosomal subunit protein bL27 from Ruegeria pomeroyi (strain ATCC 700808 / DSM 15171 / DSS-3) (Silicibacter pomeroyi).